A 612-amino-acid chain; its full sequence is UBA domain-containing protein 6 (612 aa).

The UBA domain occupies 3–42; sequence DLDTKIKTLKNMGVSESDAKDSLERCGYDVESAAEFIFSG. Residue serine 595 is modified to Phosphoserine.

It localises to the cytoplasm. It is found in the nucleus. The sequence is that of UBA domain-containing protein 6 (ucp6) from Schizosaccharomyces pombe (strain 972 / ATCC 24843) (Fission yeast).